The sequence spans 503 residues: Potassium voltage-gated channel subfamily V member 1 (503 aa).

Disordered stretches follow at residues 1–20 (MDLS…DSGS) and 171–192 (KKDT…KGPC). The Cytoplasmic segment spans residues 3–213 (LSPRNRPLLD…EKPGSSTAAR (211 aa)). Low complexity predominate over residues 10 to 20 (LLDSSSLDSGS). Residues 171-187 (KKDTDDQESQHESEQDF) are compositionally biased toward basic and acidic residues. A helical transmembrane segment spans residues 214-234 (IFGVISIIFVAVSIVNMALMS). Residues 235 to 241 (AELSWLN) lie on the Extracellular side of the membrane. A helical transmembrane segment spans residues 242-262 (LQLLEILEYVCISWFTGEFVL). Over 263–279 (RFLCVKDRCHFLRKVPN) the chain is Cytoplasmic. A helical transmembrane segment spans residues 280 to 300 (IIDLLAILPFYITLLVESLSG). Residues 301-312 (SHTTQELENVGR) are Extracellular-facing. Residues 313–334 (LVQVLRLLRALRMLKLGRHSTG) form a helical; Voltage-sensor membrane-spanning segment. Residues 335–348 (LRSLGMTITQCYEE) are Cytoplasmic-facing. The helical transmembrane segment at 349-369 (VGLLLLFLSVGISIFSTIEYF) threads the bilayer. The Selectivity filter motif lies at 395-400 (TVGYGD). A helical membrane pass occupies residues 410–430 (IVAFMCILSGILVLALPIAII). At 431 to 503 (NDRFSACYFT…RSSGGDDFWF (73 aa)) the chain is on the cytoplasmic side.

The protein belongs to the potassium channel family. V (TC 1.A.1.2) subfamily. Kv8.1/KCNV1 sub-subfamily. Heteromultimer with KCNB1 and KCNB2. Interacts with KCNC4 and KCND1.

The protein resides in the cell membrane. Functionally, potassium channel subunit that does not form functional channels by itself. Modulates KCNB1 and KCNB2 channel activity by shifting the threshold for inactivation to more negative values and by slowing the rate of inactivation. Can down-regulate the channel activity of KCNB1, KCNB2, KCNC4 and KCND1, possibly by trapping them in intracellular membranes. The protein is Potassium voltage-gated channel subfamily V member 1 (Kcnv1) of Mus musculus (Mouse).